A 223-amino-acid polypeptide reads, in one-letter code: Cytidylate kinase (223 aa).

Residue 12-20 (GPAGSGKST) participates in ATP binding.

This sequence belongs to the cytidylate kinase family. Type 1 subfamily.

It localises to the cytoplasm. It carries out the reaction CMP + ATP = CDP + ADP. The catalysed reaction is dCMP + ATP = dCDP + ADP. This Aster yellows witches'-broom phytoplasma (strain AYWB) protein is Cytidylate kinase.